A 314-amino-acid polypeptide reads, in one-letter code: Signal peptidase I (314 aa).

The helical transmembrane segment at 5–25 (LTIFLLISTLVTGIFWSFYCI) threads the bilayer. The Cytoplasmic segment spans residues 26–63 (KSFKNYLINKKIINNNNFHQEKIEKSKNKTYFLKSLAS). Residues 64-84 (FFPIFLAIFIIRSFIYEPFQI) traverse the membrane as a helical segment. Topologically, residues 85 to 314 (PSGSMMPTLL…IRINRIGSIH (230 aa)) are extracellular. Active-site residues include Ser88 and Lys143.

It belongs to the peptidase S26 family.

It localises to the cell membrane. It carries out the reaction Cleavage of hydrophobic, N-terminal signal or leader sequences from secreted and periplasmic proteins.. The protein is Signal peptidase I (lepB) of Buchnera aphidicola subsp. Acyrthosiphon pisum (strain APS) (Acyrthosiphon pisum symbiotic bacterium).